The chain runs to 83 residues: Large ribosomal subunit protein bL31B (83 aa).

This sequence belongs to the bacterial ribosomal protein bL31 family. Type B subfamily. As to quaternary structure, part of the 50S ribosomal subunit.

This Leifsonia xyli subsp. xyli (strain CTCB07) protein is Large ribosomal subunit protein bL31B.